The following is a 107-amino-acid chain: uncharacterized protein (107 aa).

This is an uncharacterized protein from Acidianus bottle-shaped virus (isolate Italy/Pozzuoli) (ABV).